Reading from the N-terminus, the 332-residue chain is Small ribosomal subunit protein uS2 (332 aa).

It belongs to the universal ribosomal protein uS2 family.

This chain is Small ribosomal subunit protein uS2, found in Nitrobacter winogradskyi (strain ATCC 25391 / DSM 10237 / CIP 104748 / NCIMB 11846 / Nb-255).